Here is a 117-residue protein sequence, read N- to C-terminus: Large ribosomal subunit protein bL20 (117 aa).

Belongs to the bacterial ribosomal protein bL20 family.

Binds directly to 23S ribosomal RNA and is necessary for the in vitro assembly process of the 50S ribosomal subunit. It is not involved in the protein synthesizing functions of that subunit. The sequence is that of Large ribosomal subunit protein bL20 from Pelotomaculum thermopropionicum (strain DSM 13744 / JCM 10971 / SI).